The primary structure comprises 440 residues: Glycerophosphocholine cholinephosphodiesterase ENPP6 (440 aa).

The first 22 residues, 1–22 (MAGKLWTFLLLFGFSWVWPASA), serve as a signal peptide directing secretion. Residues Asp32, Ser71, and Asn92 each coordinate substrate. Zn(2+) contacts are provided by Asp32 and Ser71. Ser71 (nucleophile) is an active-site residue. Ser71 carries the phosphoserine modification. N-linked (GlcNAc...) asparagine glycans are attached at residues Asn100 and Asn118. The cysteines at positions 142 and 154 are disulfide-linked. Asp193 contacts substrate. Residues Asp193, His197, Asp240, and His241 each coordinate Zn(2+). His241 is a binding site for substrate. A glycan (N-linked (GlcNAc...) asparagine) is linked at Asn341. Residue His354 participates in substrate binding. Position 354 (His354) interacts with Zn(2+). N-linked (GlcNAc...) asparagine glycosylation occurs at Asn404. Ser419 carries the GPI-anchor amidated serine lipid modification. Residues 420-440 (SSPSIPPNSCALVLILLLYFV) constitute a propeptide, removed in mature form.

It belongs to the nucleotide pyrophosphatase/phosphodiesterase family. In terms of assembly, homodimer; disulfide-linked. Homotetramer. Zn(2+) serves as cofactor.

Its subcellular location is the cell membrane. The enzyme catalyses sn-glycerol 3-phosphocholine + H2O = phosphocholine + glycerol + H(+). It catalyses the reaction a 1-acyl-sn-glycero-3-phosphocholine + H2O = a 1-acyl-sn-glycerol + phosphocholine + H(+). It carries out the reaction a 1-O-alkyl-sn-glycero-3-phosphocholine + H2O = a 1-O-alkyl-sn-glycerol + phosphocholine + H(+). The catalysed reaction is 1-dodecanoyl-sn-glycero-3-phosphocholine + H2O = 1-dodecanoyl-sn-glycerol + phosphocholine + H(+). The enzyme catalyses 1-hexadecanoyl-sn-glycero-3-phosphocholine + H2O = 1-hexadecanoyl-sn-glycerol + phosphocholine + H(+). It catalyses the reaction 1-(5Z,8Z,11Z,14Z-eicosatetraenoyl)-sn-glycero-3-phosphocholine + H2O = 1-(5Z,8Z,11Z,14Z-eicosatetraenoyl)-sn-glycerol + phosphocholine + H(+). It carries out the reaction 1-tetradecanoyl-sn-glycero-3-phosphocholine + H2O = 1-tetradecanoyl-sn-glycerol + phosphocholine + H(+). The catalysed reaction is sphing-4-enine-phosphocholine + H2O = sphing-4-enine + phosphocholine + H(+). The enzyme catalyses 1-(9Z-octadecenoyl)-sn-glycero-3-phosphocholine + H2O = 1-(9Z-octadecenoyl)-sn-glycerol + phosphocholine + H(+). It catalyses the reaction 1-(9Z,12Z)-octadecadienoyl-sn-glycero-3-phosphocholine + H2O = 1-(9Z,12Z-octadecadienoyl)-sn-glycerol + phosphocholine + H(+). It carries out the reaction glycero-2-phosphocholine + H2O = phosphocholine + glycerol + H(+). Its activity is regulated as follows. Inhibited by EDTA and EGTA in vitro. Functionally, choline-specific glycerophosphodiesterase that hydrolyzes glycerophosphocholine (GPC) and lysophosphatidylcholine (LPC) and contributes to supplying choline to the cells. Has a preference for LPC with short (12:0 and 14:0) or polyunsaturated (18:2 and 20:4) fatty acids. In vitro, hydrolyzes only choline-containing lysophospholipids, such as sphingosylphosphorylcholine (SPC), platelet-activating factor (PAF) and lysoPAF, but not other lysophospholipids. This chain is Glycerophosphocholine cholinephosphodiesterase ENPP6, found in Rattus norvegicus (Rat).